Consider the following 243-residue polypeptide: Tryptophan synthase alpha chain (243 aa).

Active-site proton acceptor residues include Glu-31 and Asp-42.

Belongs to the TrpA family. As to quaternary structure, tetramer of two alpha and two beta chains.

It carries out the reaction (1S,2R)-1-C-(indol-3-yl)glycerol 3-phosphate + L-serine = D-glyceraldehyde 3-phosphate + L-tryptophan + H2O. It participates in amino-acid biosynthesis; L-tryptophan biosynthesis; L-tryptophan from chorismate: step 5/5. Functionally, the alpha subunit is responsible for the aldol cleavage of indoleglycerol phosphate to indole and glyceraldehyde 3-phosphate. The polypeptide is Tryptophan synthase alpha chain (Staphylococcus epidermidis (strain ATCC 35984 / DSM 28319 / BCRC 17069 / CCUG 31568 / BM 3577 / RP62A)).